The following is a 963-amino-acid chain: Putative RNA Helicase B962L (963 aa).

Residues 43-229 enclose the Helicase ATP-binding domain; it reads IPTSLADRVL…FGIGKENIIL (187 aa). ATP is bound at residue 56–63; sequence SRTGSGKS. Positions 167–170 match the DEAH box motif; sequence DEAH. The Helicase C-terminal domain maps to 253-459; that stretch reads ACETALTIHK…TIKKNKEGVF (207 aa). The helical transmembrane segment at 521–541 threads the bilayer; sequence GYFWQAAISDIATILAVVSVV.

It belongs to the DEAD box helicase family. DEAH subfamily.

The protein resides in the host membrane. Its subcellular location is the virion. It catalyses the reaction ATP + H2O = ADP + phosphate + H(+). This is Putative RNA Helicase B962L from Ornithodoros (relapsing fever ticks).